A 469-amino-acid polypeptide reads, in one-letter code: 3-isopropylmalate dehydratase large subunit (469 aa).

[4Fe-4S] cluster contacts are provided by Cys-347, Cys-407, and Cys-410.

It belongs to the aconitase/IPM isomerase family. LeuC type 1 subfamily. As to quaternary structure, heterodimer of LeuC and LeuD. [4Fe-4S] cluster serves as cofactor.

It catalyses the reaction (2R,3S)-3-isopropylmalate = (2S)-2-isopropylmalate. It functions in the pathway amino-acid biosynthesis; L-leucine biosynthesis; L-leucine from 3-methyl-2-oxobutanoate: step 2/4. Functionally, catalyzes the isomerization between 2-isopropylmalate and 3-isopropylmalate, via the formation of 2-isopropylmaleate. This chain is 3-isopropylmalate dehydratase large subunit, found in Proteus mirabilis (strain HI4320).